The sequence spans 261 residues: Carbonic anhydrase 1 (261 aa).

Position 2 is an N-acetylalanine (alanine 2). The Alpha-carbonic anhydrase domain maps to 4–261; the sequence is ADWGYGSENG…LKGRTVRASF (258 aa). Histidine 65 acts as the Proton donor/acceptor in catalysis. Histidine 95, histidine 97, and histidine 120 together coordinate Zn(2+). Residues threonine 200 and 200–201 contribute to the substrate site; that span reads TH. The interval 239-261 is disordered; the sequence is AVPVLSNHRPPQPLKGRTVRASF.

It belongs to the alpha-carbonic anhydrase family. The cofactor is Zn(2+).

It localises to the cytoplasm. It carries out the reaction hydrogencarbonate + H(+) = CO2 + H2O. The enzyme catalyses urea = cyanamide + H2O. With respect to regulation, inhibited by acetazolamide. Its function is as follows. Catalyzes the reversible hydration of carbon dioxide. Can hydrate cyanamide to urea. The sequence is that of Carbonic anhydrase 1 (Ca1) from Mus musculus (Mouse).